Here is a 379-residue protein sequence, read N- to C-terminus: Sporozoite surface protein P36 (379 aa).

The first 33 residues, 1 to 33 (MAYNIWEEYIMANFHNVYPVVTNLFLFIALSYS), serve as a signal peptide directing secretion. 2 6-Cys domains span residues 69–206 (FVFF…VKAN) and 215–379 (FIKG…TVES). 3 disulfide bridges follow: cysteine 91–cysteine 101, cysteine 115–cysteine 186, and cysteine 129–cysteine 184. N-linked (GlcNAc...) asparagine glycosylation is found at asparagine 98 and asparagine 118. A glycan (N-linked (GlcNAc...) asparagine) is linked at asparagine 206. Disulfide bonds link cysteine 219-cysteine 243, cysteine 257-cysteine 360, and cysteine 295-cysteine 358. Asparagine 298 and asparagine 374 each carry an N-linked (GlcNAc...) asparagine glycan.

It is found in the cell surface. Its subcellular location is the cell membrane. In terms of biological role, involved in sporozoite infection of hepatocytes and replication therein. This Plasmodium falciparum (isolate 3D7) protein is Sporozoite surface protein P36 (PF36).